Here is a 201-residue protein sequence, read N- to C-terminus: Imidazoleglycerol-phosphate dehydratase (201 aa).

The protein belongs to the imidazoleglycerol-phosphate dehydratase family.

The protein localises to the cytoplasm. It carries out the reaction D-erythro-1-(imidazol-4-yl)glycerol 3-phosphate = 3-(imidazol-4-yl)-2-oxopropyl phosphate + H2O. It participates in amino-acid biosynthesis; L-histidine biosynthesis; L-histidine from 5-phospho-alpha-D-ribose 1-diphosphate: step 6/9. The sequence is that of Imidazoleglycerol-phosphate dehydratase from Synechococcus sp. (strain CC9311).